An 84-amino-acid chain; its full sequence is Metallothionein-like protein 2C (84 aa).

This sequence belongs to the metallothionein superfamily. Type 15 family.

The protein resides in the cytoplasm. Its subcellular location is the cytosol. Functionally, metallothioneins have a high content of cysteine residues that bind various heavy metals. Acts as a reactive oxygen species (ROS) scavenger in the cytosol. Possesses superoxide anion and hydroxyl radical scavenging activities in vitro. Plays a role during root development, lateral root initiation and seed embryo germination, possibly by regulating levels of cytokinin. The sequence is that of Metallothionein-like protein 2C (MT2C) from Oryza sativa subsp. indica (Rice).